Here is a 72-residue protein sequence, read N- to C-terminus: Exodeoxyribonuclease 7 small subunit (72 aa).

It belongs to the XseB family. As to quaternary structure, heterooligomer composed of large and small subunits.

The protein resides in the cytoplasm. It catalyses the reaction Exonucleolytic cleavage in either 5'- to 3'- or 3'- to 5'-direction to yield nucleoside 5'-phosphates.. Its function is as follows. Bidirectionally degrades single-stranded DNA into large acid-insoluble oligonucleotides, which are then degraded further into small acid-soluble oligonucleotides. This chain is Exodeoxyribonuclease 7 small subunit, found in Clostridium kluyveri (strain NBRC 12016).